The primary structure comprises 1201 residues: Vitamin B12-dependent ribonucleotide reductase (1201 aa).

Residues serine 153, 198–199 (AC), glycine 230, 482–486 (NPCSE), and 683–687 (PTGTI) each bind substrate. Cysteine 199 and cysteine 495 are disulfide-bonded. Asparagine 482 functions as the Proton acceptor in the catalytic mechanism. Cysteine 484 acts as the Cysteine radical intermediate in catalysis. Glutamate 486 functions as the Proton acceptor in the catalytic mechanism. Basic and acidic residues predominate over residues 1100-1118 (DEIGSKRATAESNGQEKET). The disordered stretch occupies residues 1100 to 1120 (DEIGSKRATAESNGQEKETLS).

This sequence belongs to the ribonucleoside diphosphate reductase class-2 family. It depends on adenosylcob(III)alamin as a cofactor.

The enzyme catalyses a 2'-deoxyribonucleoside 5'-diphosphate + [thioredoxin]-disulfide + H2O = a ribonucleoside 5'-diphosphate + [thioredoxin]-dithiol. Catalyzes the reduction of ribonucleotides to deoxyribonucleotides. May function to provide a pool of deoxyribonucleotide precursors for DNA repair during oxygen limitation and/or for immediate growth after restoration of oxygen. The sequence is that of Vitamin B12-dependent ribonucleotide reductase (nrdJ) from Leptospira interrogans serogroup Icterohaemorrhagiae serovar copenhageni (strain Fiocruz L1-130).